The sequence spans 204 residues: Ras-related protein RabQ (204 aa).

12–19 (GPPFVGKS) provides a ligand contact to GTP. An Effector region motif is present at residues 34 to 42 (MDTTIGVEF). GTP-binding positions include 60–64 (DTAGQ) and 118–121 (NKCD). S-geranylgeranyl cysteine attachment occurs at residues C202 and C203.

It belongs to the small GTPase superfamily. Rab family.

The protein localises to the cell membrane. This chain is Ras-related protein RabQ (rabQ), found in Dictyostelium discoideum (Social amoeba).